The following is a 1057-amino-acid chain: Protein transport protein Sec16B (1057 aa).

The segment covering 1-15 (MELWVPQTQGRTTGP) has biased composition (polar residues). Positions 1 to 86 (MELWVPQTQG…VSGADYLKGS (86 aa)) are disordered. The span at 45-63 (QDTHKNSKPQQDPRDDHQQ) shows a compositional bias: basic and acidic residues. A phosphoserine mark is found at Ser-70, Ser-137, Ser-161, and Ser-185. The interval 185 to 220 (SAFGLEQPGEFFPESGAQKQKPSLTSKSNLLQQHES) is disordered. The segment covering 201 to 213 (AQKQKPSLTSKSN) has biased composition (polar residues). Ser-245 carries the phosphoserine modification. Residues 263 to 708 (APMRFYVPHV…KHKELEQTRT (446 aa)) are central conserved domain (CCD); required for localization to endoplasmic reticulum exit sites. The span at 704 to 715 (EQTRTGDLRDPD) shows a compositional bias: basic and acidic residues. Disordered regions lie at residues 704–778 (EQTR…TYSE) and 849–1057 (AVIS…SQPC). Polar residues predominate over residues 737 to 764 (GQQNYSEDSEYSSALWPTSEQTSLTNPT). Thr-856 carries the post-translational modification Phosphothreonine. A phosphoserine mark is found at Ser-866, Ser-869, Ser-872, and Ser-881. Basic and acidic residues predominate over residues 883-903 (GADKPPHPDASQKEKLRDGKN). The segment covering 906-926 (SSGFGWFSWFRSKPASSVSTS) has biased composition (low complexity). The span at 927 to 938 (GDEDSVDSSDSE) shows a compositional bias: acidic residues. A compositionally biased stretch (gly residues) spans 990–999 (EGVGIGGFSG). The segment covering 1028 to 1043 (NPSQVPQLPTASSLNR) has biased composition (polar residues).

Belongs to the SEC16 family. SEC16A and SEC16B are each present in multiple copies in a heteromeric complex. Interacts with TFG. Interacts with SEC13. Liver, kidney, heart, spleen and brain.

Its subcellular location is the endoplasmic reticulum membrane. The protein resides in the golgi apparatus membrane. Its function is as follows. Plays a role in the organization of the endoplasmic reticulum exit sites (ERES), also known as transitional endoplasmic reticulum (tER). Required for secretory cargo traffic from the endoplasmic reticulum to the Golgi apparatus. Involved in peroxisome biogenesis. Regulates the transport of peroxisomal biogenesis factors PEX3 and PEX16 from the ER to peroxisomes. This chain is Protein transport protein Sec16B (Sec16b), found in Rattus norvegicus (Rat).